The chain runs to 564 residues: Dihydroxy-acid dehydratase (564 aa).

Residues 1-10 (MTDTRTKRRM) show a composition bias toward basic residues. Residues 1–23 (MTDTRTKRRMNWNSHHITQGDER) are disordered. Position 57 (Cys57) interacts with [2Fe-2S] cluster. Residue Asp89 participates in Mg(2+) binding. Residue Cys130 participates in [2Fe-2S] cluster binding. Asp131 and Lys132 together coordinate Mg(2+). An N6-carboxylysine modification is found at Lys132. Cys202 provides a ligand contact to [2Fe-2S] cluster. Residue Glu454 coordinates Mg(2+). Ser480 functions as the Proton acceptor in the catalytic mechanism.

It belongs to the IlvD/Edd family. As to quaternary structure, homodimer. The cofactor is [2Fe-2S] cluster. Mg(2+) is required as a cofactor.

It catalyses the reaction (2R)-2,3-dihydroxy-3-methylbutanoate = 3-methyl-2-oxobutanoate + H2O. The enzyme catalyses (2R,3R)-2,3-dihydroxy-3-methylpentanoate = (S)-3-methyl-2-oxopentanoate + H2O. The protein operates within amino-acid biosynthesis; L-isoleucine biosynthesis; L-isoleucine from 2-oxobutanoate: step 3/4. It participates in amino-acid biosynthesis; L-valine biosynthesis; L-valine from pyruvate: step 3/4. Functionally, functions in the biosynthesis of branched-chain amino acids. Catalyzes the dehydration of (2R,3R)-2,3-dihydroxy-3-methylpentanoate (2,3-dihydroxy-3-methylvalerate) into 2-oxo-3-methylpentanoate (2-oxo-3-methylvalerate) and of (2R)-2,3-dihydroxy-3-methylbutanoate (2,3-dihydroxyisovalerate) into 2-oxo-3-methylbutanoate (2-oxoisovalerate), the penultimate precursor to L-isoleucine and L-valine, respectively. The polypeptide is Dihydroxy-acid dehydratase (Deinococcus geothermalis (strain DSM 11300 / CIP 105573 / AG-3a)).